The sequence spans 410 residues: Arginine deiminase (410 aa).

Cys-400 (amidino-cysteine intermediate) is an active-site residue.

It belongs to the arginine deiminase family.

The protein resides in the cytoplasm. The enzyme catalyses L-arginine + H2O = L-citrulline + NH4(+). It participates in amino-acid degradation; L-arginine degradation via ADI pathway; carbamoyl phosphate from L-arginine: step 1/2. In Levilactobacillus brevis (strain ATCC 367 / BCRC 12310 / CIP 105137 / JCM 1170 / LMG 11437 / NCIMB 947 / NCTC 947) (Lactobacillus brevis), this protein is Arginine deiminase.